Consider the following 1905-residue polypeptide: Microtubule cross-linking factor 1 (1905 aa).

Residues 1–249 (METLNGPAGG…SSDREPPRGA (249 aa)) form a necessary for colocalization and binding with microtubules region. The disordered stretch occupies residues 1–329 (METLNGPAGG…SLGEQSRLVP (329 aa)). The tract at residues 1–508 (METLNGPAGG…QDDSADLRCQ (508 aa)) is necessary for self-assembly, microtubule bundling activity and apicobasal microtubule organization. Basic residues predominate over residues 22 to 40 (QHHRHHHLHPVAERRRLHR). Low complexity-rich tracts occupy residues 63–95 (VPSS…AAPG) and 115–130 (AGAR…LGSR). Phosphoserine is present on residues Ser77 and Ser87. Residues Ser217, Ser221, and Ser263 each carry the phosphoserine modification. Low complexity predominate over residues 268–283 (ALLAAPLAAGACPGGR). 3 coiled-coil regions span residues 330–404 (AAEE…EQKS), 432–483 (SVRL…SSLK), and 513–718 (KEEA…LQHE). Disordered regions lie at residues 544–563 (YGDV…PSTR), 601–631 (DMRG…LESS), 671–694 (FEPP…GAPL), 737–800 (LRAP…SEPC), and 842–867 (AGLR…GDQQ). Ser549 is modified (phosphoserine). Residues 601–616 (DMRGQQEREGPGRDHA) are compositionally biased toward basic and acidic residues. The residue at position 618 (Ser618) is a Phosphoserine. Thr621 carries the post-translational modification Phosphothreonine. The segment covering 680–692 (LGEGASPGAGGGA) has biased composition (gly residues). Ser685 bears the Phosphoserine mark. Over residues 741–770 (SPRDSDAESDAGKKESDGEESRLPQPKREG) the composition is skewed to basic and acidic residues. The residue at position 776 (Ser776) is a Phosphoserine. The segment covering 857 to 866 (GEEEQGEGDQ) has biased composition (acidic residues). 4 positions are modified to phosphoserine: Ser901, Ser923, Lys941, and Thr975. A disordered region spans residues 1080–1100 (GVQGGHQADGPDHDSDRGCGF). Coiled coils occupy residues 1143–1201 (KALL…ELGS) and 1238–1278 (EKNW…KENS). Residues 1265–1382 (EFLWRIEQLQ…EENHKGNLQR (118 aa)) are necessary for interaction with MARK2 and apicobasal microtubule bundle formation in polarized epithelial cells. Ser1278 is subject to Phosphoserine. The segment at 1346–1384 (ALSLDDEPEEPPAHRPEREFRNRLPEEEENHKGNLQRAV) is disordered. The span at 1356–1377 (PPAHRPEREFRNRLPEEEENHK) shows a compositional bias: basic and acidic residues. Phosphoserine occurs at positions 1385, 1388, and 1399. Phosphothreonine is present on Thr1417. Ser1421 carries the phosphoserine modification. Tyr1427 bears the Phosphotyrosine mark. The interval 1485–1505 (DTMTSPEHCQKQPLRSHVLTE) is disordered. Residues Ser1514, Ser1523, Ser1561, Ser1578, Ser1583, Ser1592, and Ser1661 each carry the phosphoserine modification. The segment at 1524-1569 (ITAAGGEGPFPTSRARGSPGDTKGGPPEPMLSRWPCTSPRHSRDYV) is disordered. Disordered stretches follow at residues 1655–1689 (GSGV…SRQV), 1707–1756 (PKYG…PVHT), 1782–1842 (GLRA…APPG), and 1863–1905 (KEER…PWGL). Thr1667 and Thr1675 each carry phosphothreonine. The segment covering 1678 to 1687 (SSPSRSLRSR) has biased composition (low complexity). The necessary for colocalization and binding with microtubules stretch occupies residues 1678–1773 (SSPSRSLRSR…SLFNIIDHSP (96 aa)). Ser1679 and Ser1683 each carry phosphoserine. The segment covering 1744-1756 (ARSTTTRESPVHT) has biased composition (polar residues). 4 positions are modified to phosphoserine: Ser1791, Ser1808, Ser1812, and Ser1814.

This sequence belongs to the SOGA family. Homodimer. Associates (via N- and C-terminus domains) with microtubule filaments. In terms of assembly, interacts with MARK2; the interaction is direct. Post-translationally, phosphorylated during mitosis in a CDK1-dependent manner.

It is found in the lateral cell membrane. The protein localises to the apical cell membrane. Its subcellular location is the cytoplasm. The protein resides in the cytoskeleton. It localises to the spindle pole. It is found in the midbody. Microtubule-associated factor involved in the late phase of epithelial polarization and microtubule dynamics regulation. Plays a role in the development and maintenance of non-centrosomal microtubule bundles at the lateral membrane in polarized epithelial cells. Required for faithful chromosome segregation during mitosis. The sequence is that of Microtubule cross-linking factor 1 (MTCL1) from Homo sapiens (Human).